The chain runs to 447 residues: NADH-ubiquinone oxidoreductase chain 4 (447 aa).

The next 13 membrane-spanning stretches (helical) occupy residues 4–24 (LLLL…FMLF), 34–54 (LIIG…LNWI), 67–87 (MYSY…FISL), 100–120 (LLMI…FYLF), 149–169 (MFYT…IYLI), 189–209 (LFIY…FHGW), 223–243 (MILA…LMII), 248–268 (FILI…ILSL), 279–299 (IIAI…MTFL), 304–324 (IGGY…FFLV), 349–371 (MSLL…NLIS), 388–408 (LILM…FMFI), and 422–442 (GILV…LMFL).

Belongs to the complex I subunit 4 family.

Its subcellular location is the mitochondrion membrane. It carries out the reaction a ubiquinone + NADH + 5 H(+)(in) = a ubiquinol + NAD(+) + 4 H(+)(out). Core subunit of the mitochondrial membrane respiratory chain NADH dehydrogenase (Complex I) that is believed to belong to the minimal assembly required for catalysis. Complex I functions in the transfer of electrons from NADH to the respiratory chain. The immediate electron acceptor for the enzyme is believed to be ubiquinone. The polypeptide is NADH-ubiquinone oxidoreductase chain 4 (ND4) (Apis mellifera ligustica (Common honeybee)).